The sequence spans 179 residues: MSLKQRYRETIQPKLLKDLSLSNIHEVPKVLKVTVNRGLGEAATNAKSLEASVNELAQITGQKVVITRAKKAIAAFKIRQGMPIGCAVTLRGDRMYAFLERFINLALPRIRDFRGVSPKSFDGRGNYTVGVREQIIFPEISFDKIDAIRGMDITIVTSARTDEEGRALLREMGMPFRSN.

It belongs to the universal ribosomal protein uL5 family. In terms of assembly, part of the 50S ribosomal subunit; part of the 5S rRNA/L5/L18/L25 subcomplex. Contacts the 5S rRNA and the P site tRNA. Forms a bridge to the 30S subunit in the 70S ribosome.

Its function is as follows. This is one of the proteins that bind and probably mediate the attachment of the 5S RNA into the large ribosomal subunit, where it forms part of the central protuberance. In the 70S ribosome it contacts protein S13 of the 30S subunit (bridge B1b), connecting the 2 subunits; this bridge is implicated in subunit movement. Contacts the P site tRNA; the 5S rRNA and some of its associated proteins might help stabilize positioning of ribosome-bound tRNAs. The chain is Large ribosomal subunit protein uL5 from Synechococcus sp. (strain CC9311).